Reading from the N-terminus, the 251-residue chain is Cell division protein ZapD (251 aa).

This sequence belongs to the ZapD family. As to quaternary structure, interacts with FtsZ.

It is found in the cytoplasm. Cell division factor that enhances FtsZ-ring assembly. Directly interacts with FtsZ and promotes bundling of FtsZ protofilaments, with a reduction in FtsZ GTPase activity. The chain is Cell division protein ZapD from Burkholderia mallei (strain NCTC 10247).